Reading from the N-terminus, the 289-residue chain is Protoheme IX farnesyltransferase 2 (289 aa).

9 helical membrane passes run 13–33 (LEITILIDIVAIAAFLAVPGS), 37–57 (IYDLLILIFAGTLASMSASIF), 86–106 (LFFIIATAMVLLSFVTSFILL), 109–129 (VTSAFILGGFASYVLLYTIIL), 137–157 (IVIGGIAGSFPALAGWASITG), 159–179 (VSATSLFIAFLVFMWTPTHFW), 207–227 (EFWIMVNTSILVIYSILPLFI), 232–252 (VGLLYMPMAAVMDALLIYYVA), and 267–287 (AFHFSNMYMLMLLIGIMLILV).

It belongs to the UbiA prenyltransferase family. Protoheme IX farnesyltransferase subfamily.

Its subcellular location is the cell membrane. It carries out the reaction heme b + (2E,6E)-farnesyl diphosphate + H2O = Fe(II)-heme o + diphosphate. It participates in porphyrin-containing compound metabolism; heme O biosynthesis; heme O from protoheme: step 1/1. Functionally, converts heme B (protoheme IX) to heme O by substitution of the vinyl group on carbon 2 of heme B porphyrin ring with a hydroxyethyl farnesyl side group. This chain is Protoheme IX farnesyltransferase 2, found in Picrophilus torridus (strain ATCC 700027 / DSM 9790 / JCM 10055 / NBRC 100828 / KAW 2/3).